Reading from the N-terminus, the 350-residue chain is tRNA uridine(34) hydroxylase (350 aa).

One can recognise a Rhodanese domain in the interval 146-240 (DDPDAIFIDM…YARRAREQGL (95 aa)). The active-site Cysteine persulfide intermediate is Cys-200. The tract at residues 318–350 (QRRRRAGREKGNKIFNKSRGRLNSKLGIPDPTE) is disordered.

This sequence belongs to the TrhO family.

The enzyme catalyses uridine(34) in tRNA + AH2 + O2 = 5-hydroxyuridine(34) in tRNA + A + H2O. Its function is as follows. Catalyzes oxygen-dependent 5-hydroxyuridine (ho5U) modification at position 34 in tRNAs. This is tRNA uridine(34) hydroxylase from Salmonella arizonae (strain ATCC BAA-731 / CDC346-86 / RSK2980).